Here is a 184-residue protein sequence, read N- to C-terminus: Oligoribonuclease (184 aa).

An Exonuclease domain is found at 8-171 (LIWIDLEMTG…EDIRESVVEL (164 aa)). Tyr-129 is a catalytic residue.

The protein belongs to the oligoribonuclease family.

It is found in the cytoplasm. Its function is as follows. 3'-to-5' exoribonuclease specific for small oligoribonucleotides. This chain is Oligoribonuclease, found in Buchnera aphidicola subsp. Acyrthosiphon pisum (strain APS) (Acyrthosiphon pisum symbiotic bacterium).